Reading from the N-terminus, the 879-residue chain is Translation initiation factor IF-2 (879 aa).

2 disordered regions span residues 45-216 (AGHM…ERKR) and 228-293 (SYEE…EKPV). 3 stretches are compositionally biased toward basic and acidic residues: residues 60-72 (NAAKSDNKSDKNS), 83-99 (RKTDARKSQSSEKKISP), and 107-163 (AEKK…ERLQ). Over residues 164–173 (MEAALQAQMQ) the composition is skewed to low complexity. Basic and acidic residues-rich tracts occupy residues 174 to 216 (EQER…ERKR), 228 to 271 (SYEE…ERRN), and 280 to 291 (RNNDNKKGKFEK). Positions 380 to 549 (VRAPVVTIMG…LIQAEMLELT (170 aa)) constitute a tr-type G domain. The tract at residues 389 to 396 (GHVDHGKT) is G1. 389 to 396 (GHVDHGKT) lines the GTP pocket. A G2 region spans residues 414 to 418 (GITQH). The G3 stretch occupies residues 435 to 438 (DTPG). Residues 435–439 (DTPGH) and 489–492 (NKMD) contribute to the GTP site. The G4 stretch occupies residues 489-492 (NKMD). The interval 525-527 (SAK) is G5.

It belongs to the TRAFAC class translation factor GTPase superfamily. Classic translation factor GTPase family. IF-2 subfamily.

The protein localises to the cytoplasm. One of the essential components for the initiation of protein synthesis. Protects formylmethionyl-tRNA from spontaneous hydrolysis and promotes its binding to the 30S ribosomal subunits. Also involved in the hydrolysis of GTP during the formation of the 70S ribosomal complex. This is Translation initiation factor IF-2 from Dichelobacter nodosus (strain VCS1703A).